Reading from the N-terminus, the 203-residue chain is MARYTGPTTRVSRRFGQQILGSGKAFERRSYPPGQHGPKLRRKVSEYAVGLNEKQKLRYIYGLLERQFRRVFEIAKKERGVTGERFLQLLETRLDSVVYLLGLAKSRAAARQFVNHGHIRVNGHKVDIASYNVKAGDEIEVKNSPASRQLATRCLEENRIRNVPGWLSMNAETFKATVNRLPTRDEMEQGINEQLIVEFYSRF.

The S4 RNA-binding domain occupies 92-164 (TRLDSVVYLL…LEENRIRNVP (73 aa)).

This sequence belongs to the universal ribosomal protein uS4 family. In terms of assembly, part of the 30S ribosomal subunit. Contacts protein S5. The interaction surface between S4 and S5 is involved in control of translational fidelity.

Its function is as follows. One of the primary rRNA binding proteins, it binds directly to 16S rRNA where it nucleates assembly of the body of the 30S subunit. Functionally, with S5 and S12 plays an important role in translational accuracy. The chain is Small ribosomal subunit protein uS4 from Opitutus terrae (strain DSM 11246 / JCM 15787 / PB90-1).